The primary structure comprises 174 residues: Co-chaperone protein HscB (174 aa).

A J domain is found at 2–74 (NYFALFDLPR…LNRAIYFLCL (73 aa)).

The protein belongs to the HscB family. As to quaternary structure, interacts with HscA and stimulates its ATPase activity. Interacts with IscU.

In terms of biological role, co-chaperone involved in the maturation of iron-sulfur cluster-containing proteins. Seems to help targeting proteins to be folded toward HscA. The protein is Co-chaperone protein HscB of Buchnera aphidicola subsp. Acyrthosiphon pisum (strain 5A).